Reading from the N-terminus, the 390-residue chain is MLLKKIFLTGIIVLDLVFFVSYGFAARLKDIASISGVRENQLIGYGLVVGLAGTGDDVKNGFTSESLSNLLNRQGISMKNKTLKADNIAAVMVTSSLPAFAKIGARIDATVSSIGDAKSLHGGTLLMTPLRGVDGEIYAVAQGPVTLGGYAVGGANSSTGKNHASAGRVSSGVLVERELKYDFDRLRSFTLNLLQPDFTTSACLADVMNKTLGQHVEAKQVDSFSVDVRMKEATGGNLMNIISMMENLDVPVDSKSVVVMNEKTGTVVMGENVRISTVAVAHGNLSIQIKEDIRVSQPLPFSPLSSKGNQPAMDKKTGTIVAPGGQTVVTLDTTVGIEEEKKQVMVISKGVTIQEVVKALNALGVSPRDLITIMQTIKAAGALQAELKII.

The signal sequence occupies residues Met-1–Ala-25.

This sequence belongs to the FlgI family. The basal body constitutes a major portion of the flagellar organelle and consists of four rings (L,P,S, and M) mounted on a central rod.

Its subcellular location is the periplasm. The protein resides in the bacterial flagellum basal body. Functionally, assembles around the rod to form the L-ring and probably protects the motor/basal body from shearing forces during rotation. The polypeptide is Flagellar P-ring protein (Syntrophus aciditrophicus (strain SB)).